Consider the following 87-residue polypeptide: Pro-gurmarin (87 aa).

The N-terminal stretch at 1–20 is a signal peptide; that stretch reads MAKFAAIVLLILVASATVNA. Residues 21 to 52 constitute a propeptide that is removed on maturation; that stretch reads VKEHDELPTTGMSRKILLQPVFKSLIISIAEG. Gln-53 is modified (pyrrolidone carboxylic acid). 3 disulfide bridges follow: Cys-55–Cys-70, Cys-62–Cys-75, and Cys-69–Cys-85.

Expressed in leaves (at protein level).

In terms of biological role, peptide that strongly, but reversibly, suppresses the sweet taste-response to various sweeteners, including sugars, sweet amino acids and the artificial sweetener saccharin. In rodents, potentially binds to a sweet taste receptor present on apical microvilli of a subset of taste bud cells. Highly effective at blocking the sweet taste-response in rodents such as rats and mice, though mice may possess a mix of gurmarin-sensitive and -insensitive receptors. Has almost no effect on the sweet taste-response in humans. Inhibits Staphylococcus aureus biofilm formation without affecting bacterial viability. May be one of at least 9 different disulfide-rich peptides produced with varying properties. The chain is Pro-gurmarin from Gymnema sylvestre (Gurmar).